Here is a 260-residue protein sequence, read N- to C-terminus: MLLLLSPAKSLDYATPLPEGWPHSTPCFIAQSSALIALLRSRSPQQIAALMQLSAPLAALNAERYQAWQPRCSASNSRQALLAFDGDVYEGLQARTLSAPDLDWAQQHLAILSGLYGVLRPLDRIQPHRLEMGTRLATAAGGNLYQFWGRQIAEHLNHRLHDDPDPVLVNLASQEYFKAVDRKALNARVVECVFEDFKGGAYKIISFYAKRARGLMARHAITHRLSRPRQLEGFGLGGYAYAPAASDPERLVFRRKSPAA.

This sequence belongs to the UPF0246 family.

The chain is UPF0246 protein Veis_4789 from Verminephrobacter eiseniae (strain EF01-2).